Here is a 205-residue protein sequence, read N- to C-terminus: Dephospho-CoA kinase (205 aa).

The 199-residue stretch at 7 to 205 folds into the DPCK domain; sequence IIGITGRIAS…QEIINYERFE (199 aa). 15 to 20 contributes to the ATP binding site; that stretch reads ASGKDA.

Belongs to the CoaE family.

It is found in the cytoplasm. It catalyses the reaction 3'-dephospho-CoA + ATP = ADP + CoA + H(+). Its pathway is cofactor biosynthesis; coenzyme A biosynthesis; CoA from (R)-pantothenate: step 5/5. Its function is as follows. Catalyzes the phosphorylation of the 3'-hydroxyl group of dephosphocoenzyme A to form coenzyme A. This Borrelia garinii subsp. bavariensis (strain ATCC BAA-2496 / DSM 23469 / PBi) (Borreliella bavariensis) protein is Dephospho-CoA kinase.